The primary structure comprises 141 residues: MAMTMRLDVVSVEGSLFSGIVESVVAPAEMGAVGIYPGHAPLLTRLKPGAVRLRIPYQAEEEIVYVSGGMLEVQPYKVTLLADVAMREKALAEADLHAEKHRAEAVLKDRVTADAYARLEVELAKALTYVQGVQKLRRRGF.

This sequence belongs to the ATPase epsilon chain family. As to quaternary structure, F-type ATPases have 2 components, CF(1) - the catalytic core - and CF(0) - the membrane proton channel. CF(1) has five subunits: alpha(3), beta(3), gamma(1), delta(1), epsilon(1). CF(0) has three main subunits: a, b and c.

The protein localises to the cell inner membrane. In terms of biological role, produces ATP from ADP in the presence of a proton gradient across the membrane. The polypeptide is ATP synthase epsilon chain 1 (Thiobacillus denitrificans (strain ATCC 25259 / T1)).